Consider the following 1609-residue polypeptide: Transmembrane protein 131-like (1609 aa).

Residues 1-40 form the signal peptide; it reads MAGLRRPQPGCYCRTAAAVNLLLGVFQVLLPCCRPGGAQG. The Extracellular segment spans residues 41-869; sequence QAIEPLPNVV…VVPGPSWEES (829 aa). Asparagine 343, asparagine 439, asparagine 522, asparagine 593, asparagine 709, and asparagine 846 each carry an N-linked (GlcNAc...) asparagine glycan. Positions 696 to 916 are required for Wnt-signaling inhibition and LRP6 degradation; sequence DYGKVTSLIL…QNASSSSQQN (221 aa). The chain crosses the membrane as a helical span at residues 870 to 890; it reads FWRLTVFFVSLSLLGVILIAF. The Cytoplasmic segment spans residues 891-1609; it reads QQAQYILMEF…SRDSSYCGNV (719 aa). Disordered stretches follow at residues 946 to 974, 991 to 1014, 1108 to 1144, 1159 to 1178, and 1304 to 1340; these read RGKN…YGHS, TAAA…SSLP, KTSK…NQQV, VDTK…EDMF, and SSSD…PMVD. The segment covering 952–961 has biased composition (polar residues); it reads PVNTPQSRIQ. The segment covering 991-1000 has biased composition (low complexity); that stretch reads TAAASSTSTT. Serine 1122 is subject to Phosphoserine. Low complexity predominate over residues 1304-1331; sequence SSSDCGSSSGSVRASRGSWGSWSSTSSS.

It belongs to the TMEM131 family. Expressed in thymocytes.

The protein resides in the cell membrane. It localises to the cytoplasm. Its subcellular location is the endoplasmic reticulum. Functionally, membrane-associated form that antagonizes canonical Wnt signaling by triggering lysosome-dependent degradation of Wnt-activated LRP6. Regulates thymocyte proliferation. The polypeptide is Transmembrane protein 131-like (Homo sapiens (Human)).